Here is a 227-residue protein sequence, read N- to C-terminus: Cytochrome c oxidase subunit 2 (227 aa).

At 1–14 (MANHSQLGFQDASS) the chain is on the mitochondrial intermembrane side. Residues 15-45 (PIMEELVEFHDHALMVALAICSLVLYLLTLM) form a helical membrane-spanning segment. Residues 46 to 58 (LMEKLSSNTVDAQ) are Mitochondrial matrix-facing. A helical membrane pass occupies residues 59-86 (EVELIWTILPAIVLVLLALPSLQILYMM). Over 87 to 227 (DEIDEPDLTL…FEAWSSLLSS (141 aa)) the chain is Mitochondrial intermembrane. His160, Cys195, Glu197, Cys199, His203, and Met206 together coordinate Cu cation. Glu197 lines the Mg(2+) pocket.

It belongs to the cytochrome c oxidase subunit 2 family. In terms of assembly, component of the cytochrome c oxidase (complex IV, CIV), a multisubunit enzyme composed of 14 subunits. The complex is composed of a catalytic core of 3 subunits MT-CO1, MT-CO2 and MT-CO3, encoded in the mitochondrial DNA, and 11 supernumerary subunits COX4I, COX5A, COX5B, COX6A, COX6B, COX6C, COX7A, COX7B, COX7C, COX8 and NDUFA4, which are encoded in the nuclear genome. The complex exists as a monomer or a dimer and forms supercomplexes (SCs) in the inner mitochondrial membrane with NADH-ubiquinone oxidoreductase (complex I, CI) and ubiquinol-cytochrome c oxidoreductase (cytochrome b-c1 complex, complex III, CIII), resulting in different assemblies (supercomplex SCI(1)III(2)IV(1) and megacomplex MCI(2)III(2)IV(2)). Found in a complex with TMEM177, COA6, COX18, COX20, SCO1 and SCO2. Interacts with TMEM177 in a COX20-dependent manner. Interacts with COX20. Interacts with COX16. Cu cation serves as cofactor.

Its subcellular location is the mitochondrion inner membrane. It catalyses the reaction 4 Fe(II)-[cytochrome c] + O2 + 8 H(+)(in) = 4 Fe(III)-[cytochrome c] + 2 H2O + 4 H(+)(out). Its function is as follows. Component of the cytochrome c oxidase, the last enzyme in the mitochondrial electron transport chain which drives oxidative phosphorylation. The respiratory chain contains 3 multisubunit complexes succinate dehydrogenase (complex II, CII), ubiquinol-cytochrome c oxidoreductase (cytochrome b-c1 complex, complex III, CIII) and cytochrome c oxidase (complex IV, CIV), that cooperate to transfer electrons derived from NADH and succinate to molecular oxygen, creating an electrochemical gradient over the inner membrane that drives transmembrane transport and the ATP synthase. Cytochrome c oxidase is the component of the respiratory chain that catalyzes the reduction of oxygen to water. Electrons originating from reduced cytochrome c in the intermembrane space (IMS) are transferred via the dinuclear copper A center (CU(A)) of subunit 2 and heme A of subunit 1 to the active site in subunit 1, a binuclear center (BNC) formed by heme A3 and copper B (CU(B)). The BNC reduces molecular oxygen to 2 water molecules using 4 electrons from cytochrome c in the IMS and 4 protons from the mitochondrial matrix. In Gallus gallus (Chicken), this protein is Cytochrome c oxidase subunit 2 (MT-CO2).